Here is a 218-residue protein sequence, read N- to C-terminus: Probable GTP-binding protein EngB (218 aa).

An EngB-type G domain is found at 31–205 (SGIEIAFAGR…EQKVTSWYAQ (175 aa)). Residues 39 to 46 (GRSNAGKS), 66 to 70 (GRTQL), 84 to 87 (DLPG), 151 to 154 (TKAD), and 184 to 186 (FSS) each bind GTP. 2 residues coordinate Mg(2+): S46 and T68.

It belongs to the TRAFAC class TrmE-Era-EngA-EngB-Septin-like GTPase superfamily. EngB GTPase family. Mg(2+) is required as a cofactor.

Necessary for normal cell division and for the maintenance of normal septation. This Psychromonas ingrahamii (strain DSM 17664 / CCUG 51855 / 37) protein is Probable GTP-binding protein EngB.